The following is a 338-amino-acid chain: Fructose-1,6-bisphosphatase class 1 1 (338 aa).

4 residues coordinate Mg(2+): Glu94, Asp116, Leu118, and Asp119. Substrate-binding positions include 119 to 122 (DGSS), Asn210, and Lys276. Mg(2+) is bound at residue Glu282.

Belongs to the FBPase class 1 family. In terms of assembly, homotetramer. It depends on Mg(2+) as a cofactor.

It is found in the cytoplasm. It carries out the reaction beta-D-fructose 1,6-bisphosphate + H2O = beta-D-fructose 6-phosphate + phosphate. The protein operates within carbohydrate biosynthesis; gluconeogenesis. The protein is Fructose-1,6-bisphosphatase class 1 1 of Paraburkholderia phymatum (strain DSM 17167 / CIP 108236 / LMG 21445 / STM815) (Burkholderia phymatum).